A 144-amino-acid polypeptide reads, in one-letter code: DYVCGPLQRLKVKRQWAEAYGSGNSREEFGHFIWSHVFQHSPAARDMFKRVRGDNIHTPAFRAHATRVLGGLDMCIALLDDEPVLNTQLAHLAKQHETRGVEAAHYDTVNHAVMMGVENVIGSEVFDQDAWKPCLNVITNGIQG.

Residues 3–144 (VCGPLQRLKV…LNVITNGIQG (142 aa)) form the Globin domain. Heme b is bound at residue His-96.

It belongs to the globin family. As to quaternary structure, part of giant hemoglobin C1, V1 and V2. This worm has three different extracellular Hbs: two dissolved in the vascular blood, V1 (CA. 3,500 kDa) and V2 (CA. 400 kDa), and one in the coelomic fluid, C1 (CA. 400 kDa). V1 consists of four heme-containing, globin chains (B-E) and four linker chains (L1-L4). V2 consists of six globin chains (A-F) and C1 consists of five globin chains (A-E).

It is found in the secreted. The protein localises to the extracellular space. In Riftia pachyptila (Vent tube worm), this protein is Giant hemoglobins B chain.